Reading from the N-terminus, the 440-residue chain is ATP-dependent protease ATPase subunit HslU (440 aa).

ATP is bound by residues Ile-18 and 60–65; that span reads GVGKTE. The disordered stretch occupies residues 138–159; that stretch reads RAQSFDQEDPSAGTRQKLRKKL. Positions 252, 318, and 390 each coordinate ATP.

It belongs to the ClpX chaperone family. HslU subfamily. As to quaternary structure, a double ring-shaped homohexamer of HslV is capped on each side by a ring-shaped HslU homohexamer. The assembly of the HslU/HslV complex is dependent on binding of ATP.

It localises to the cytoplasm. In terms of biological role, ATPase subunit of a proteasome-like degradation complex; this subunit has chaperone activity. The binding of ATP and its subsequent hydrolysis by HslU are essential for unfolding of protein substrates subsequently hydrolyzed by HslV. HslU recognizes the N-terminal part of its protein substrates and unfolds these before they are guided to HslV for hydrolysis. This chain is ATP-dependent protease ATPase subunit HslU, found in Alkalilimnicola ehrlichii (strain ATCC BAA-1101 / DSM 17681 / MLHE-1).